Consider the following 435-residue polypeptide: GTPase Der (435 aa).

EngA-type G domains are found at residues 4–167 (PVVA…PAEK) and 175–350 (ISFS…DNQN). GTP contacts are provided by residues 10-17 (GQPNVGKS), 57-61 (DTGGI), 119-122 (NKAD), 181-188 (GRPNVGKS), 228-232 (DTAGI), and 293-296 (NKWD). In terms of domain architecture, KH-like spans 351–435 (QRIQSSVLND…PIKILPRKRK (85 aa)).

Belongs to the TRAFAC class TrmE-Era-EngA-EngB-Septin-like GTPase superfamily. EngA (Der) GTPase family. Associates with the 50S ribosomal subunit.

Functionally, GTPase that plays an essential role in the late steps of ribosome biogenesis. This Lactobacillus acidophilus (strain ATCC 700396 / NCK56 / N2 / NCFM) protein is GTPase Der.